The following is a 311-amino-acid chain: MSKNQEISKKEQYNLNKLQKRLRRNVGEAIADFNMIEEGDRIMVCLSGGKDSYTMLEILRNLQQSAPINFSLVAVNLDQKQPGFPEHVLPEYLEKLGVEYKIVEENTYGIVKEKIPEGKTTCSLCSRLRRGILYRTATELGATKIALGHHRDDILQTLFLNMFYGGKMKGMPPKLMSDDGKHIVIRPLAYCREKDIQRFADAKAFPIIPCNLCGSQPNLQRQVIADMLRDWDKRYPGRIETMFSAMQNVVPSHLCDTNLFDFKGITHGSEVVNRGDLAFDREEIPLQPAGWQPEEDENQLDELRLNVVEVK.

A PP-loop motif motif is present at residues 47–52 (SGGKDS). Residues Cys-122, Cys-125, and Cys-213 each coordinate [4Fe-4S] cluster.

It belongs to the TtcA family. In terms of assembly, homodimer. It depends on Mg(2+) as a cofactor. [4Fe-4S] cluster serves as cofactor.

It is found in the cytoplasm. It carries out the reaction cytidine(32) in tRNA + S-sulfanyl-L-cysteinyl-[cysteine desulfurase] + AH2 + ATP = 2-thiocytidine(32) in tRNA + L-cysteinyl-[cysteine desulfurase] + A + AMP + diphosphate + H(+). The protein operates within tRNA modification. Its function is as follows. Catalyzes the ATP-dependent 2-thiolation of cytidine in position 32 of tRNA, to form 2-thiocytidine (s(2)C32). The sulfur atoms are provided by the cysteine/cysteine desulfurase (IscS) system. This Escherichia coli O7:K1 (strain IAI39 / ExPEC) protein is tRNA-cytidine(32) 2-sulfurtransferase.